Here is a 546-residue protein sequence, read N- to C-terminus: Alpha-isocomene synthase (546 aa).

Residues Asp-299, Asp-303, Asp-443, and Glu-451 each contribute to the Mg(2+) site. A DDXXD motif motif is present at residues Asp-299 to Asp-303.

This sequence belongs to the terpene synthase family. Tpsa subfamily. Mg(2+) is required as a cofactor. It depends on Mn(2+) as a cofactor. As to expression, highly expressed in roots, lower levels in stems and leaves and detected in disk florets, but not in ray florets.

The catalysed reaction is (2E,6E)-farnesyl diphosphate = (-)-alpha-isocomene + diphosphate. The protein operates within secondary metabolite biosynthesis; terpenoid biosynthesis. Sesquiterpene synthase involved in the biosynthesis of alpha-isocomene as the major product and detectable amounts of beta-caryophyllene, beta-isocomene, silphinene and modeph-2-ene. Produces exclusively the (-)-(E)-beta caryophyllene enantiomer. The protein is Alpha-isocomene synthase of Matricaria chamomilla var. recutita (German chamomile).